A 34-amino-acid chain; its full sequence is Voltage sensor toxin 3 (34 aa).

Cystine bridges form between cysteine 2–cysteine 17, cysteine 9–cysteine 22, and cysteine 16–cysteine 29.

Belongs to the neurotoxin 10 (Hwtx-1) family. 61 (VSTX3) subfamily. Expressed by the venom gland.

The protein localises to the secreted. Potent voltage-gated sodium channel blocker (IC(50)=190 nM and 210 nM on human and rat Nav1.3/SCN3A respectively, 430 nM on human Nav1.7/SCN9A, 770 nM and 290 nM on human and rat Nav1.8/SCN10A, respectively). Binds the voltage-sensor domain of the potassium channel KvAP (from Aeropyrum pernix) and weakly inhibits this channel. The protein is Voltage sensor toxin 3 of Grammostola rosea (Chilean rose tarantula).